Consider the following 298-residue polypeptide: MTQLIITYQSDSKLEESEVFLSELNRIKKEEDKFAKFSSLSDLRAIVKKGEFRIVSIYLSSGSILAEIFTFEFLKEFYGVLDFGSVLKVNILALDSIDKVKAFERNLLFSGFIKVKKLKGDGLNSSDSDFEIVIKAEKPSWKPEEGKVLVDDIDLEGSVPDIKNYVPLGQGKESCKSKERACNNCNCGRADLEKEIGIEAARKVYQEKVETGTARSSCGNCYLGDAFRCSGCPYKGMPAFKPGEKVSLANAEGDANDRTVDMNLIHEEKVDLITTTFDDDGSGVSNVQSKGGVLKLNI.

Residues 1–143 (MTQLIITYQS…IKAEKPSWKP (143 aa)) are N-terminal SAM-like domain. Positions 143–162 (PEEGKVLVDDIDLEGSVPDI) are linker. 4 residues coordinate [2Fe-2S] cluster: C175, C182, C185, and C187. The fe-S binding site A stretch occupies residues 175–187 (CKSKERACNNCNC). 4 residues coordinate [4Fe-4S] cluster: C218, C221, C229, and C232. 2 consecutive short sequence motifs (cx2C motif) follow at residues 218-221 (CGNC) and 229-232 (CSGC). Positions 218 to 232 (CGNCYLGDAFRCSGC) are fe-S binding site B.

Belongs to the anamorsin family. Monomer. [2Fe-2S] cluster is required as a cofactor. The cofactor is [4Fe-4S] cluster.

It localises to the cytoplasm. Its subcellular location is the mitochondrion intermembrane space. Functionally, component of the cytosolic iron-sulfur (Fe-S) protein assembly (CIA) machinery. Required for the maturation of extramitochondrial Fe-S proteins. Part of an electron transfer chain functioning in an early step of cytosolic Fe-S biogenesis, facilitating the de novo assembly of a [4Fe-4S] cluster on the cytosolic Fe-S scaffold complex. Electrons are transferred from NADPH via a FAD- and FMN-containing diflavin oxidoreductase. Together with the diflavin oxidoreductase, also required for the assembly of the diferric tyrosyl radical cofactor of ribonucleotide reductase (RNR), probably by providing electrons for reduction during radical cofactor maturation in the catalytic small subunit. This chain is Anamorsin homolog, found in Cryptosporidium hominis.